A 425-amino-acid polypeptide reads, in one-letter code: Histidine--tRNA ligase 1 (425 aa).

The protein belongs to the class-II aminoacyl-tRNA synthetase family. As to quaternary structure, homodimer.

Its subcellular location is the cytoplasm. The catalysed reaction is tRNA(His) + L-histidine + ATP = L-histidyl-tRNA(His) + AMP + diphosphate + H(+). In Bacillus cereus (strain ZK / E33L), this protein is Histidine--tRNA ligase 1.